The primary structure comprises 153 residues: UPF0735 ACT domain-containing protein FN1487 (153 aa).

In terms of domain architecture, ACT spans Ser-76 to Ser-152.

The protein belongs to the UPF0735 family.

The chain is UPF0735 ACT domain-containing protein FN1487 from Fusobacterium nucleatum subsp. nucleatum (strain ATCC 25586 / DSM 15643 / BCRC 10681 / CIP 101130 / JCM 8532 / KCTC 2640 / LMG 13131 / VPI 4355).